Consider the following 434-residue polypeptide: Glutamyl-tRNA reductase 2 (434 aa).

Substrate is bound by residues 57–60 (TCNR), S113, 118–120 (DFE), and Q124. C58 functions as the Nucleophile in the catalytic mechanism. An NADP(+)-binding site is contributed by 193 to 198 (GTGKIG).

Belongs to the glutamyl-tRNA reductase family. In terms of assembly, homodimer.

It carries out the reaction (S)-4-amino-5-oxopentanoate + tRNA(Glu) + NADP(+) = L-glutamyl-tRNA(Glu) + NADPH + H(+). Its pathway is porphyrin-containing compound metabolism; protoporphyrin-IX biosynthesis; 5-aminolevulinate from L-glutamyl-tRNA(Glu): step 1/2. Catalyzes the NADPH-dependent reduction of glutamyl-tRNA(Glu) to glutamate 1-semialdehyde (GSA). The protein is Glutamyl-tRNA reductase 2 of Flavobacterium johnsoniae (strain ATCC 17061 / DSM 2064 / JCM 8514 / BCRC 14874 / CCUG 350202 / NBRC 14942 / NCIMB 11054 / UW101) (Cytophaga johnsonae).